The sequence spans 67 residues: Light-harvesting protein B-870 alpha chain (67 aa).

The residue at position 1 (M1) is an N-formylmethionine; in strain DSM 149 and DSM 151. The Cytoplasmic segment spans residues 1–12 (MWRIWRLFDPMR). Residues 13-33 (AMVAQAVFLLGLAVLIHLMLL) form a helical membrane-spanning segment. H29 serves as a coordination point for a bacteriochlorophyll. Topologically, residues 34–67 (GTNKYNWLDGAKKAPAATAVAPVPAEVTSLAQAK) are periplasmic.

Belongs to the antenna complex alpha subunit family. As to quaternary structure, an alpha/beta heterodimer. The core complex is formed by different alpha and beta chains, binding bacteriochlorophyll molecules, and arranged most probably in tetrameric structures disposed around the reaction center. The non-pigmented gamma chains may constitute additional components. In terms of processing, the N-terminus is blocked.

The protein localises to the cell inner membrane. Antenna complexes are light-harvesting systems, which transfer the excitation energy to the reaction centers. This is Light-harvesting protein B-870 alpha chain (pufA) from Rubrivivax gelatinosus (Rhodocyclus gelatinosus).